The chain runs to 486 residues: Surface lipoprotein assembly modifier (486 aa).

The signal sequence occupies residues 1 to 29 (MKNGVKQISFLSLIGLSLIGLSLTNIAWA). The tract at residues 30–197 (KVARPKNDTL…QYLLTLNQRN (168 aa)) is N-terminal domain. Residues 198-486 (QWIWQVGLNF…RIYLEIGKIF (289 aa)) form a C-terminal probable beta barrel region. Beta stranded transmembrane passes span 199–209 (WIWQVGLNFLN), 237–248 (GRVFFISRKKWP), 253–262 (FFSKTMFNGN), 276–286 (TLRIGGGLGYQ), 290–300 (VEVSLFPFQEK), 320–330 (LGIRLENVDWL), 334–344 (WQISTALEYGE), 358–367 (YFISSTLFYL), 373–382 (FWFVGMDFHR), 395–404 (KTLRLGWGQD), 409–419 (ISSRLTFSYAN), 437–446 (YATTITLWHR), 453–463 (LTPKLSWDYQK), and 476–486 (NRIYLEIGKIF).

The protein belongs to the Slam family.

Its subcellular location is the cell outer membrane. Its function is as follows. Required for correct export to the cell surface of some cell outer membrane lipoproteins (tested with TpbP) upon heterologous expression in E.coli and probably also in Haemophilus. The protein is Surface lipoprotein assembly modifier of Haemophilus influenzae (strain 86-028NP).